Here is a 144-residue protein sequence, read N- to C-terminus: Large ribosomal subunit protein uL15 (144 aa).

A disordered region spans residues 1–53 (MRLNTLSPAEGAKHSAKRLGRGIGSGLGKTGGRGHKGQKSRTGGGVRRGFEGG). Residues 21–31 (RGIGSGLGKTG) show a composition bias toward gly residues.

The protein belongs to the universal ribosomal protein uL15 family. Part of the 50S ribosomal subunit.

Binds to the 23S rRNA. The protein is Large ribosomal subunit protein uL15 of Pasteurella multocida (strain Pm70).